Consider the following 778-residue polypeptide: Protein translocase subunit SecA 2 (778 aa).

Residues Gln94, 112–116 (GEGKT), and Asp501 each bind ATP.

This sequence belongs to the SecA family. In terms of assembly, monomer and homodimer. Part of the essential Sec protein translocation apparatus which comprises SecA, SecYEG and auxiliary proteins SecDF. Other proteins may also be involved.

The protein resides in the cell membrane. It localises to the cytoplasm. The enzyme catalyses ATP + H2O + cellular proteinSide 1 = ADP + phosphate + cellular proteinSide 2.. Functionally, part of the Sec protein translocase complex. Interacts with the SecYEG preprotein conducting channel. Has a central role in coupling the hydrolysis of ATP to the transfer of proteins into and across the cell membrane, serving as an ATP-driven molecular motor driving the stepwise translocation of polypeptide chains across the membrane. The sequence is that of Protein translocase subunit SecA 2 from Mycobacterium leprae (strain TN).